The sequence spans 318 residues: Methionyl-tRNA formyltransferase (318 aa).

110 to 113 (SLLP) contacts (6S)-5,6,7,8-tetrahydrofolate.

This sequence belongs to the Fmt family.

The enzyme catalyses L-methionyl-tRNA(fMet) + (6R)-10-formyltetrahydrofolate = N-formyl-L-methionyl-tRNA(fMet) + (6S)-5,6,7,8-tetrahydrofolate + H(+). Attaches a formyl group to the free amino group of methionyl-tRNA(fMet). The formyl group appears to play a dual role in the initiator identity of N-formylmethionyl-tRNA by promoting its recognition by IF2 and preventing the misappropriation of this tRNA by the elongation apparatus. In Lacticaseibacillus paracasei (strain ATCC 334 / BCRC 17002 / CCUG 31169 / CIP 107868 / KCTC 3260 / NRRL B-441) (Lactobacillus paracasei), this protein is Methionyl-tRNA formyltransferase.